The sequence spans 334 residues: Methylthioribose-1-phosphate isomerase (334 aa).

Substrate-binding positions include 44–46 (RGA), Arg87, and Gln192. Asp233 acts as the Proton donor in catalysis. Residue 243 to 244 (NK) coordinates substrate.

The protein belongs to the eIF-2B alpha/beta/delta subunits family. MtnA subfamily.

The enzyme catalyses 5-(methylsulfanyl)-alpha-D-ribose 1-phosphate = 5-(methylsulfanyl)-D-ribulose 1-phosphate. The protein operates within amino-acid biosynthesis; L-methionine biosynthesis via salvage pathway; L-methionine from S-methyl-5-thio-alpha-D-ribose 1-phosphate: step 1/6. In terms of biological role, catalyzes the interconversion of methylthioribose-1-phosphate (MTR-1-P) into methylthioribulose-1-phosphate (MTRu-1-P). This chain is Methylthioribose-1-phosphate isomerase, found in Dehalococcoides mccartyi (strain ATCC BAA-2266 / KCTC 15142 / 195) (Dehalococcoides ethenogenes (strain 195)).